The primary structure comprises 320 residues: Mycothiol acetyltransferase (320 aa).

2 N-acetyltransferase domains span residues S8–R141 and L152–A320. E36 is a 1D-myo-inositol 2-(L-cysteinylamino)-2-deoxy-alpha-D-glucopyranoside binding site. Acetyl-CoA is bound by residues L80–V82 and R88–T93. 1D-myo-inositol 2-(L-cysteinylamino)-2-deoxy-alpha-D-glucopyranoside-binding residues include E179, K229, and E239. Acetyl-CoA contacts are provided by residues L243 to V245 and Q250 to R256. 1D-myo-inositol 2-(L-cysteinylamino)-2-deoxy-alpha-D-glucopyranoside is bound at residue Y284. N289–R294 is a binding site for acetyl-CoA.

It belongs to the acetyltransferase family. MshD subfamily. Monomer.

The enzyme catalyses 1D-myo-inositol 2-(L-cysteinylamino)-2-deoxy-alpha-D-glucopyranoside + acetyl-CoA = mycothiol + CoA + H(+). Catalyzes the transfer of acetyl from acetyl-CoA to desacetylmycothiol (Cys-GlcN-Ins) to form mycothiol. This is Mycothiol acetyltransferase from Mycobacterium ulcerans (strain Agy99).